The chain runs to 239 residues: 1-(5-phosphoribosyl)-5-[(5-phosphoribosylamino)methylideneamino] imidazole-4-carboxamide isomerase (239 aa).

The Proton acceptor role is filled by Asp-8. Catalysis depends on Asp-130, which acts as the Proton donor.

This sequence belongs to the HisA/HisF family.

The protein resides in the cytoplasm. The catalysed reaction is 1-(5-phospho-beta-D-ribosyl)-5-[(5-phospho-beta-D-ribosylamino)methylideneamino]imidazole-4-carboxamide = 5-[(5-phospho-1-deoxy-D-ribulos-1-ylimino)methylamino]-1-(5-phospho-beta-D-ribosyl)imidazole-4-carboxamide. It functions in the pathway amino-acid biosynthesis; L-histidine biosynthesis; L-histidine from 5-phospho-alpha-D-ribose 1-diphosphate: step 4/9. The protein is 1-(5-phosphoribosyl)-5-[(5-phosphoribosylamino)methylideneamino] imidazole-4-carboxamide isomerase of Lachnoclostridium phytofermentans (strain ATCC 700394 / DSM 18823 / ISDg) (Clostridium phytofermentans).